The primary structure comprises 246 residues: Orotidine 5'-phosphate decarboxylase (246 aa).

Residues aspartate 22, lysine 44, aspartate 71 to threonine 80, threonine 131, arginine 192, glutamine 201, glycine 221, and arginine 222 each bind substrate. Lysine 73 functions as the Proton donor in the catalytic mechanism.

It belongs to the OMP decarboxylase family. Type 1 subfamily. Homodimer.

The enzyme catalyses orotidine 5'-phosphate + H(+) = UMP + CO2. It functions in the pathway pyrimidine metabolism; UMP biosynthesis via de novo pathway; UMP from orotate: step 2/2. Catalyzes the decarboxylation of orotidine 5'-monophosphate (OMP) to uridine 5'-monophosphate (UMP). This chain is Orotidine 5'-phosphate decarboxylase, found in Yersinia enterocolitica serotype O:8 / biotype 1B (strain NCTC 13174 / 8081).